A 622-amino-acid polypeptide reads, in one-letter code: Chaperone protein HscA homolog (622 aa).

It belongs to the heat shock protein 70 family.

Its function is as follows. Chaperone involved in the maturation of iron-sulfur cluster-containing proteins. Has a low intrinsic ATPase activity which is markedly stimulated by HscB. This is Chaperone protein HscA homolog from Pseudoalteromonas atlantica (strain T6c / ATCC BAA-1087).